Here is a 109-residue protein sequence, read N- to C-terminus: Small ribosomal subunit protein bS6 (109 aa).

It belongs to the bacterial ribosomal protein bS6 family.

Functionally, binds together with bS18 to 16S ribosomal RNA. This Anaplasma phagocytophilum (strain HZ) protein is Small ribosomal subunit protein bS6.